The primary structure comprises 354 residues: Methionine import ATP-binding protein MetN (354 aa).

Residues 8 to 250 (LDHIDITFRQ…PKEALTQEFI (243 aa)) form the ABC transporter domain. Residue 42–49 (GYSGAGKS) participates in ATP binding.

The protein belongs to the ABC transporter superfamily. Methionine importer (TC 3.A.1.24) family. As to quaternary structure, the complex is composed of two ATP-binding proteins (MetN), two transmembrane proteins (MetI) and a solute-binding protein (MetQ).

It is found in the cell membrane. It carries out the reaction L-methionine(out) + ATP + H2O = L-methionine(in) + ADP + phosphate + H(+). It catalyses the reaction D-methionine(out) + ATP + H2O = D-methionine(in) + ADP + phosphate + H(+). Part of the ABC transporter complex MetNIQ involved in methionine import. Responsible for energy coupling to the transport system. This chain is Methionine import ATP-binding protein MetN, found in Streptococcus pyogenes serotype M3 (strain ATCC BAA-595 / MGAS315).